Reading from the N-terminus, the 151-residue chain is Probable cGMP 3',5'-cyclic phosphodiesterase subunit delta (151 aa).

It belongs to the PDE6D/unc-119 family. Interacts with Pde6.

It is found in the nucleus. The protein resides in the cytoplasm. This is Probable cGMP 3',5'-cyclic phosphodiesterase subunit delta from Drosophila virilis (Fruit fly).